Consider the following 400-residue polypeptide: Subtilisin-like protease CPC735_047380 (400 aa).

The signal sequence occupies residues 1 to 19 (MARINVVVSFLAALAVVQA). Positions 20-118 (AQLLNLDGQK…IEPQRTFRAF (99 aa)) are excised as a propeptide. The 82-residue stretch at 35 to 116 (SYVVVMNDGL…NYIEPQRTFR (82 aa)) folds into the Inhibitor I9 domain. Residues 128-400 (SWGLGRISHT…DKLLYNGSGQ (273 aa)) enclose the Peptidase S8 domain. N153 is a glycosylation site (N-linked (GlcNAc...) asparagine). Catalysis depends on charge relay system residues D160 and H191. 2 N-linked (GlcNAc...) asparagine glycosylation sites follow: N244 and N252. The active-site Charge relay system is the S346. The N-linked (GlcNAc...) asparagine glycan is linked to N396.

The protein belongs to the peptidase S8 family.

The protein resides in the secreted. Its function is as follows. Secreted subtilisin-like serine protease with keratinolytic activity that contributes to pathogenicity. This is Subtilisin-like protease CPC735_047380 from Coccidioides posadasii (strain C735) (Valley fever fungus).